A 197-amino-acid polypeptide reads, in one-letter code: Putative peptidyl-prolyl cis-trans isomerase (197 aa).

One can recognise a PPIase cyclophilin-type domain in the interval 14 to 195 (GEIKVVMHTN…HDVVIESIDV (182 aa)).

The protein belongs to the cyclophilin-type PPIase family.

The catalysed reaction is [protein]-peptidylproline (omega=180) = [protein]-peptidylproline (omega=0). Its function is as follows. PPIases accelerate the folding of proteins. It catalyzes the cis-trans isomerization of proline imidic peptide bonds in oligopeptides. This chain is Putative peptidyl-prolyl cis-trans isomerase, found in Staphylococcus aureus (strain COL).